A 379-amino-acid chain; its full sequence is Sensor histidine kinase YhcY (379 aa).

The Histidine kinase domain occupies 185-373; the sequence is RLAQELHDSV…KLSIRLPLKS (189 aa). Histidine 191 is subject to Phosphohistidine; by autocatalysis.

It catalyses the reaction ATP + protein L-histidine = ADP + protein N-phospho-L-histidine.. Its function is as follows. Member of the two-component regulatory system YhcY/YhcZ. Probably activates YhcZ by phosphorylation. The sequence is that of Sensor histidine kinase YhcY (yhcY) from Bacillus subtilis (strain 168).